Reading from the N-terminus, the 129-residue chain is MRKIYATGKRKTAIAKVWLTPGKGELSINEQSLNQWLGGHEAIKMKVMQPLLLTKQEQSVDIKAVVFGGGYSAQAEALRHGISKALNAYDIVFRAILKPKGLLTRDSRVVERKKYGKRKARRSPQFSKR.

The protein belongs to the universal ribosomal protein uS9 family.

This chain is Small ribosomal subunit protein uS9, found in Helicobacter acinonychis (strain Sheeba).